A 333-amino-acid chain; its full sequence is Fructose-1,6-bisphosphatase class 1 (333 aa).

Mg(2+)-binding residues include E92, D113, L115, and D116. Substrate-binding positions include 116–119 (DGSS), N209, Y242, and K272. E278 is a Mg(2+) binding site.

The protein belongs to the FBPase class 1 family. Homotetramer. The cofactor is Mg(2+).

The protein localises to the cytoplasm. It catalyses the reaction beta-D-fructose 1,6-bisphosphate + H2O = beta-D-fructose 6-phosphate + phosphate. The protein operates within carbohydrate biosynthesis; Calvin cycle. The polypeptide is Fructose-1,6-bisphosphatase class 1 (Chlorobaculum parvum (strain DSM 263 / NCIMB 8327) (Chlorobium vibrioforme subsp. thiosulfatophilum)).